Consider the following 281-residue polypeptide: MLVFQTKLQKYQLATLISSVISNFLIFFATITPAWQVADDLDADRYVQSGLWLYCPGQAQCWYIFSDSLINYYEKVDVCRFFLIGDCRKKLLRTPYFFGWHYAVLILNVISMICMSLCAAAVIFSYVKPARSRISVIMLDVFAGFASLLLCVSLIVFMVNAEMLESKYLIGIKNTYEKEYGYSYYLAGLAFVISVITVLFAALVSTYTFLFPEEVADSEYTLKMSNNQFAVRYNNDLPQPYQPPMSQLSMQIPSTEHGSYIAGAISPRGDFKSQTRHFYSY.

The next 4 membrane-spanning stretches (helical) occupy residues 13-33 (LATL…TITP), 104-124 (VLIL…AVIF), 137-157 (IMLD…LIVF), and 184-204 (YYLA…AALV).

Belongs to the Clc family.

It localises to the membrane. This chain is Clc-like protein 5 (clc-5), found in Caenorhabditis elegans.